Reading from the N-terminus, the 438-residue chain is Methylenetetrahydrofolate--tRNA-(uracil-5-)-methyltransferase TrmFO (438 aa).

9-14 (GGGLAG) contacts FAD.

It belongs to the MnmG family. TrmFO subfamily. FAD serves as cofactor.

It is found in the cytoplasm. It carries out the reaction uridine(54) in tRNA + (6R)-5,10-methylene-5,6,7,8-tetrahydrofolate + NADH + H(+) = 5-methyluridine(54) in tRNA + (6S)-5,6,7,8-tetrahydrofolate + NAD(+). It catalyses the reaction uridine(54) in tRNA + (6R)-5,10-methylene-5,6,7,8-tetrahydrofolate + NADPH + H(+) = 5-methyluridine(54) in tRNA + (6S)-5,6,7,8-tetrahydrofolate + NADP(+). Its function is as follows. Catalyzes the folate-dependent formation of 5-methyl-uridine at position 54 (M-5-U54) in all tRNAs. The polypeptide is Methylenetetrahydrofolate--tRNA-(uracil-5-)-methyltransferase TrmFO (Lactobacillus gasseri (strain ATCC 33323 / DSM 20243 / BCRC 14619 / CIP 102991 / JCM 1131 / KCTC 3163 / NCIMB 11718 / NCTC 13722 / AM63)).